The sequence spans 343 residues: Phosphate acyltransferase (343 aa).

The protein belongs to the PlsX family. As to quaternary structure, homodimer. Probably interacts with PlsY.

The protein resides in the cytoplasm. The enzyme catalyses a fatty acyl-[ACP] + phosphate = an acyl phosphate + holo-[ACP]. The protein operates within lipid metabolism; phospholipid metabolism. Its function is as follows. Catalyzes the reversible formation of acyl-phosphate (acyl-PO(4)) from acyl-[acyl-carrier-protein] (acyl-ACP). This enzyme utilizes acyl-ACP as fatty acyl donor, but not acyl-CoA. The polypeptide is Phosphate acyltransferase (Coxiella burnetii (strain RSA 331 / Henzerling II)).